Consider the following 373-residue polypeptide: Bilirubin reductase (373 aa).

Gln-92 provides a ligand contact to FMN. The Proton donor role is filled by Arg-168. Lys-215 is a binding site for FMN. [4Fe-4S] cluster is bound by residues Cys-344, Cys-347, Cys-351, and Cys-363.

This sequence belongs to the NADH:flavin oxidoreductase/NADH oxidase family. FMN is required as a cofactor. [4Fe-4S] cluster serves as cofactor.

It catalyses the reaction urobilinogen + 4 A = (4Z,15Z)-bilirubin IXalpha + 4 AH2. The catalysed reaction is urobilinogen + 2 A = (4Z,15Z)-mesobilirubin IXalpha + 2 AH2. The protein operates within porphyrin-containing compound metabolism; protoheme degradation. Its function is as follows. Bilirubin reductase that catalyzes reduction of mesobilirubin and/or bilirubin to urobilinogen, a key step during heme degradation. Cooperates with BilS, which is probably involved in electron transfer for BilR. Urobilinogen then spontaneously degrades into urobilin, which gives urine its distinctive yellow color. The sequence is that of Bilirubin reductase from Clostridium symbiosum (strain WAL-14163).